Reading from the N-terminus, the 685-residue chain is DNA ligase (685 aa).

Residues 34–38 (DAVFD), 83–84 (SL), and Glu113 contribute to the NAD(+) site. Catalysis depends on Lys115, which acts as the N6-AMP-lysine intermediate. NAD(+) is bound by residues Arg136, Glu173, Lys297, and Lys321. The Zn(2+) site is built by Cys415, Cys418, Cys433, and Cys438. Positions 607 to 685 (QEKLQFSGKT…EQELMTLISN (79 aa)) constitute a BRCT domain.

The protein belongs to the NAD-dependent DNA ligase family. LigA subfamily. Requires Mg(2+) as cofactor. Mn(2+) serves as cofactor.

It catalyses the reaction NAD(+) + (deoxyribonucleotide)n-3'-hydroxyl + 5'-phospho-(deoxyribonucleotide)m = (deoxyribonucleotide)n+m + AMP + beta-nicotinamide D-nucleotide.. In terms of biological role, DNA ligase that catalyzes the formation of phosphodiester linkages between 5'-phosphoryl and 3'-hydroxyl groups in double-stranded DNA using NAD as a coenzyme and as the energy source for the reaction. It is essential for DNA replication and repair of damaged DNA. This Prochlorococcus marinus (strain SARG / CCMP1375 / SS120) protein is DNA ligase.